Consider the following 118-residue polypeptide: Small ribosomal subunit protein uS13 (118 aa).

A disordered region spans residues 94–118; sequence GLPVRGQRTRTNARTRKGPRKAIKK.

Belongs to the universal ribosomal protein uS13 family. As to quaternary structure, part of the 30S ribosomal subunit. Forms a loose heterodimer with protein S19. Forms two bridges to the 50S subunit in the 70S ribosome.

In terms of biological role, located at the top of the head of the 30S subunit, it contacts several helices of the 16S rRNA. In the 70S ribosome it contacts the 23S rRNA (bridge B1a) and protein L5 of the 50S subunit (bridge B1b), connecting the 2 subunits; these bridges are implicated in subunit movement. Contacts the tRNAs in the A and P-sites. In Thiobacillus denitrificans (strain ATCC 25259 / T1), this protein is Small ribosomal subunit protein uS13.